We begin with the raw amino-acid sequence, 493 residues long: UDP-N-acetylmuramoyl-L-alanyl-D-glutamate--2,6-diaminopimelate ligase (493 aa).

Position 32 (threonine 32) interacts with UDP-N-acetyl-alpha-D-muramoyl-L-alanyl-D-glutamate. 110-116 (GTNGKTT) is an ATP binding site. UDP-N-acetyl-alpha-D-muramoyl-L-alanyl-D-glutamate-binding positions include asparagine 151, 152 to 153 (TT), serine 179, and arginine 187. The residue at position 219 (lysine 219) is an N6-carboxylysine. Residues arginine 386, 410–413 (DNPR), glycine 460, and glutamate 464 each bind meso-2,6-diaminopimelate. Residues 410–413 (DNPR) carry the Meso-diaminopimelate recognition motif motif.

The protein belongs to the MurCDEF family. MurE subfamily. Mg(2+) serves as cofactor. Post-translationally, carboxylation is probably crucial for Mg(2+) binding and, consequently, for the gamma-phosphate positioning of ATP.

The protein localises to the cytoplasm. The catalysed reaction is UDP-N-acetyl-alpha-D-muramoyl-L-alanyl-D-glutamate + meso-2,6-diaminopimelate + ATP = UDP-N-acetyl-alpha-D-muramoyl-L-alanyl-gamma-D-glutamyl-meso-2,6-diaminopimelate + ADP + phosphate + H(+). Its pathway is cell wall biogenesis; peptidoglycan biosynthesis. Catalyzes the addition of meso-diaminopimelic acid to the nucleotide precursor UDP-N-acetylmuramoyl-L-alanyl-D-glutamate (UMAG) in the biosynthesis of bacterial cell-wall peptidoglycan. This chain is UDP-N-acetylmuramoyl-L-alanyl-D-glutamate--2,6-diaminopimelate ligase, found in Lactiplantibacillus plantarum (strain ATCC BAA-793 / NCIMB 8826 / WCFS1) (Lactobacillus plantarum).